Here is a 108-residue protein sequence, read N- to C-terminus: Putative transmembrane protein ORF108 (108 aa).

The next 3 helical transmembrane spans lie at 11 to 31, 33 to 53, and 69 to 89; these read FIMGLFPLLAVILISSNSSII, IAMTVIIFGWIIYETLITVHF, and VGFLGVLCLDKFPFGIILLII.

Its subcellular location is the host membrane. This Acidianus hospitalis (AFV-1) protein is Putative transmembrane protein ORF108.